A 437-amino-acid chain; its full sequence is AA9 family lytic polysaccharide monooxygenase H (437 aa).

An N-terminal signal peptide occupies residues methionine 1–alanine 21. Histidine 22 is a binding site for Cu(2+). Cysteine 64 and cysteine 193 are disulfide-bonded. N-linked (GlcNAc...) asparagine glycans are attached at residues asparagine 67 and asparagine 79. Histidine 104 contacts Cu(2+). N-linked (GlcNAc...) asparagine glycans are attached at residues asparagine 120 and asparagine 138. The O2 site is built by histidine 178 and glutamine 188. Tyrosine 190 is a Cu(2+) binding site. Asparagine 252 and asparagine 307 each carry an N-linked (GlcNAc...) asparagine glycan. The Chitin-binding type-1 domain occupies aspartate 392–glycine 437. 4 disulfides stabilise this stretch: cysteine 395–cysteine 412, cysteine 403–cysteine 418, cysteine 411–cysteine 425, and cysteine 429–cysteine 436.

This sequence belongs to the polysaccharide monooxygenase AA9 family. Requires Cu(2+) as cofactor.

The protein localises to the secreted. The catalysed reaction is [(1-&gt;4)-beta-D-glucosyl]n+m + reduced acceptor + O2 = 4-dehydro-beta-D-glucosyl-[(1-&gt;4)-beta-D-glucosyl]n-1 + [(1-&gt;4)-beta-D-glucosyl]m + acceptor + H2O.. Lytic polysaccharide monooxygenase (LPMO) that depolymerizes crystalline and amorphous polysaccharides via the oxidation of scissile alpha- or beta-(1-4)-glycosidic bonds, yielding C1 and C4 oxidation products. Catalysis by LPMOs requires the reduction of the active-site copper from Cu(II) to Cu(I) by a reducing agent and H(2)O(2) or O(2) as a cosubstrate. This is AA9 family lytic polysaccharide monooxygenase H from Botryotinia fuckeliana (strain B05.10) (Noble rot fungus).